Consider the following 853-residue polypeptide: DNA mismatch repair protein MutS (853 aa).

Position 614-621 (614-621) interacts with ATP; the sequence is GPNMGGKS.

This sequence belongs to the DNA mismatch repair MutS family.

Functionally, this protein is involved in the repair of mismatches in DNA. It is possible that it carries out the mismatch recognition step. This protein has a weak ATPase activity. In Escherichia coli (strain SE11), this protein is DNA mismatch repair protein MutS.